The sequence spans 441 residues: Transcriptional regulatory protein ZraR (441 aa).

The 115-residue stretch at 7–121 folds into the Response regulatory domain; the sequence is DILVVDDDIS…NLQATLEKAL (115 aa). D56 carries the post-translational modification 4-aspartylphosphate. Residues 141–370 enclose the Sigma-54 factor interaction domain; that stretch reads MVGKSPAMQH…LENAVERAVV (230 aa). ATP contacts are provided by G172, T173, R329, and R359. The segment at residues 421-440 is a DNA-binding region (H-T-H motif); sequence KTEAARQLGITRKTLLAKLS.

In terms of processing, phosphorylated by ZraS.

The protein resides in the cytoplasm. Activity of the ZraS/ZraR two-component system is repressed by the zinc-bound form of ZraP, which probably interacts with the periplasmic region of ZraS. In terms of biological role, part of the Zra signaling pathway, an envelope stress response (ESR) system composed of the periplasmic accessory protein ZraP, the histidine kinase ZraS and the transcriptional regulator ZraR. The ZraPSR system contributes to antibiotic resistance and is important for membrane integrity in the presence of membrane-targeting biocides. ZraR is a member of the two-component regulatory system ZraS/ZraR. When activated by ZraS, acts in conjunction with sigma-54 to regulate the expression of zraP in the presence of high Zn(2+) or Pb(2+) concentrations. Also positively autoregulates the expression of the zraSR operon. This chain is Transcriptional regulatory protein ZraR (zraR), found in Escherichia coli O157:H7.